We begin with the raw amino-acid sequence, 122 residues long: Large ribosomal subunit protein bL12 (122 aa).

Belongs to the bacterial ribosomal protein bL12 family. As to quaternary structure, homodimer. Part of the ribosomal stalk of the 50S ribosomal subunit. Forms a multimeric L10(L12)X complex, where L10 forms an elongated spine to which 2 to 4 L12 dimers bind in a sequential fashion. Binds GTP-bound translation factors.

Functionally, forms part of the ribosomal stalk which helps the ribosome interact with GTP-bound translation factors. Is thus essential for accurate translation. The protein is Large ribosomal subunit protein bL12 of Pseudomonas aeruginosa (strain LESB58).